The following is a 131-amino-acid chain: Profilin-6 (131 aa).

C13 and C115 are joined by a disulfide. The Involved in PIP2 interaction signature appears at 81 to 97 (VVIRGKKGAGGITIKKT). A Phosphothreonine modification is found at T111.

It belongs to the profilin family. In terms of assembly, occurs in many kinds of cells as a complex with monomeric actin in a 1:1 ratio. Post-translationally, phosphorylated by MAP kinases.

It localises to the cytoplasm. Its subcellular location is the cytoskeleton. Functionally, binds to actin and affects the structure of the cytoskeleton. At high concentrations, profilin prevents the polymerization of actin, whereas it enhances it at low concentrations. In Corylus avellana (European hazel), this protein is Profilin-6.